Consider the following 523-residue polypeptide: tRNA-2-methylthio-N(6)-dimethylallyladenosine synthase (523 aa).

Residues 1–26 (MNEKQRLEQTGQIQTASHPADRKSDL) form a disordered region. Polar residues predominate over residues 8–17 (EQTGQIQTAS). The 119-residue stretch at 80–198 (RKFYIRTYGC…LPYILHEAYM (119 aa)) folds into the MTTase N-terminal domain. The [4Fe-4S] cluster site is built by Cys-89, Cys-125, Cys-159, Cys-235, Cys-239, and Cys-242. The region spanning 221–451 (RKGNIKAWVN…NALVQEIAAK (231 aa)) is the Radical SAM core domain. Residues 454–517 (KQYEGQVVEV…TWTLTGELAN (64 aa)) enclose the TRAM domain.

Belongs to the methylthiotransferase family. MiaB subfamily. Monomer. Requires [4Fe-4S] cluster as cofactor.

It is found in the cytoplasm. The catalysed reaction is N(6)-dimethylallyladenosine(37) in tRNA + (sulfur carrier)-SH + AH2 + 2 S-adenosyl-L-methionine = 2-methylsulfanyl-N(6)-dimethylallyladenosine(37) in tRNA + (sulfur carrier)-H + 5'-deoxyadenosine + L-methionine + A + S-adenosyl-L-homocysteine + 2 H(+). In terms of biological role, catalyzes the methylthiolation of N6-(dimethylallyl)adenosine (i(6)A), leading to the formation of 2-methylthio-N6-(dimethylallyl)adenosine (ms(2)i(6)A) at position 37 in tRNAs that read codons beginning with uridine. The polypeptide is tRNA-2-methylthio-N(6)-dimethylallyladenosine synthase (Geobacillus thermodenitrificans (strain NG80-2)).